A 61-amino-acid chain; its full sequence is uncharacterized protein (61 aa).

This is an uncharacterized protein from Methanocaldococcus jannaschii (strain ATCC 43067 / DSM 2661 / JAL-1 / JCM 10045 / NBRC 100440) (Methanococcus jannaschii).